The chain runs to 163 residues: Large ribosomal subunit protein uL10 (163 aa).

The protein belongs to the universal ribosomal protein uL10 family. As to quaternary structure, part of the ribosomal stalk of the 50S ribosomal subunit. The N-terminus interacts with L11 and the large rRNA to form the base of the stalk. The C-terminus forms an elongated spine to which L12 dimers bind in a sequential fashion forming a multimeric L10(L12)X complex.

Forms part of the ribosomal stalk, playing a central role in the interaction of the ribosome with GTP-bound translation factors. The protein is Large ribosomal subunit protein uL10 (rplJ) of Pasteurella multocida (strain Pm70).